An 88-amino-acid chain; its full sequence is MANTTSAKKATRKIARRTIINKSRRTQMRGAVRSVEDAIKKGDREAALKAMANAEPQLMRAAQRNIIHKNNASRKVSRLTHQIAKLAK.

The protein belongs to the bacterial ribosomal protein bS20 family.

Binds directly to 16S ribosomal RNA. In Bradyrhizobium sp. (strain BTAi1 / ATCC BAA-1182), this protein is Small ribosomal subunit protein bS20.